We begin with the raw amino-acid sequence, 2009 residues long: Sodium channel protein type 1 subunit alpha (2009 aa).

Residues 1 to 128 lie on the Cytoplasmic side of the membrane; sequence MEQTVLVPPG…KIAIKILVHS (128 aa). Basic and acidic residues predominate over residues 28 to 48; that stretch reads RIAEEKAKNPKPDKKDDDENG. The interval 28-60 is disordered; that stretch reads RIAEEKAKNPKPDKKDDDENGPKPNSDLEAGKN. The I repeat unit spans residues 110 to 454; sequence ILTPFNPLRK…QQMLEQLKKQ (345 aa). The helical transmembrane segment at 129 to 146 threads the bilayer; it reads LFSMLIMCTILTNCVFMT. The Extracellular portion of the chain corresponds to 147–152; it reads MSNPPD. The helical transmembrane segment at 153–177 threads the bilayer; it reads WTKNVEYTFTGIYTFESLIKIIARG. Residues 178–188 lie on the Cytoplasmic side of the membrane; sequence FCLEDFTFLRD. A helical membrane pass occupies residues 189–205; it reads PWNWLDFTVITFAYVTE. The Extracellular segment spans residues 206 to 213; the sequence is FVDLGNVS. A helical transmembrane segment spans residues 214 to 235; sequence ALRTFRVLRALKTISVIPGLKT. Over 236–245 the chain is Cytoplasmic; that stretch reads IVGALIQSVK. Residues 246–269 traverse the membrane as a helical segment; it reads KLSDVMILTVFCLSVFALIGLQLF. The Extracellular portion of the chain corresponds to 270–369; that stretch reads MGNLRNKCVQ…YGYTSFDTFS (100 aa). Disulfide bonds link C277/C345 and C336/C351. N295, N301, N306, and N338 each carry an N-linked (GlcNAc...) asparagine glycan. The pore-forming intramembrane region spans 370-384; that stretch reads WAFLSLFRLMTQDFW. Residues 385–397 are Extracellular-facing; sequence ENLYQLTLRAAGK. The chain crosses the membrane as a helical span at residues 398–423; sequence TYMIFFVLVIFLGSFYLINLILAVVA. Over 424–768 the chain is Cytoplasmic; it reads MAYEEQNQAT…HIVNLVVMDP (345 aa). The tract at residues 455 to 528 is disordered; that stretch reads QEAAQQAAAT…EFHKSESEDS (74 aa). The span at 456-466 shows a compositional bias: low complexity; that stretch reads EAAQQAAATTA. S470 carries the phosphoserine modification. Over residues 479–492 the composition is skewed to low complexity; that stretch reads LSDSSSEASKLSSK. Residues 495–506 show a composition bias toward basic residues; the sequence is KERRNRRKKRKQ. Residues 507 to 528 show a composition bias toward basic and acidic residues; it reads KEQSGGEEKDDDEFHKSESEDS. Residues S523, S525, S550, S551, S607, and S730 each carry the phosphoserine modification. Residues 584–627 are disordered; sequence VGSENDFADDEHSTFEDNESRRDSLFVPRRHGERRNSNLSQTSR. Positions 593 to 607 are enriched in basic and acidic residues; sequence DEHSTFEDNESRRDS. The II repeat unit spans residues 750-1022; it reads CSPYWLKVKH…QIAVDRMHKG (273 aa). The helical transmembrane segment at 769–787 threads the bilayer; that stretch reads FVDLAITICIVLNTLFMAM. Topologically, residues 788–797 are extracellular; that stretch reads EHYPMTEHFN. Residues 798–820 traverse the membrane as a helical segment; it reads HVLTVGNLVFTGIFTAEMFLKII. Residues 821–830 are Cytoplasmic-facing; it reads AMDPYYYFQE. Residues 831–849 form a helical membrane-spanning segment; sequence GWNIFDGFIVTLSLVELGL. Over 850 to 854 the chain is Extracellular; sequence ANVEG. A helical membrane pass occupies residues 855–874; the sequence is LSVLRSFRLLRVFKLAKSWP. The Cytoplasmic segment spans residues 875–891; the sequence is TLNMLIKIIGNSVGALG. The helical transmembrane segment at 892–912 threads the bilayer; sequence NLTLVLAIIVFIFAVVGMQLF. The Extracellular portion of the chain corresponds to 913–938; it reads GKSYKDCVCKIATDCKLPRWHMNDFF. C921 and C927 form a disulfide bridge. An intramembrane region (pore-forming) is located at residues 939–952; that stretch reads HSFLIVFRVLCGEW. Residues 953 to 965 lie on the Extracellular side of the membrane; sequence IETMWDCMEVAGQ. C959 and C968 are joined by a disulfide. The helical transmembrane segment at 966-992 threads the bilayer; sequence AMCLTVFMMVMVIGNLVVLNLFLALLL. Residues 993–1218 lie on the Cytoplasmic side of the membrane; the sequence is SSFSADNLAA…RTCFRIVEHN (226 aa). The tract at residues 1129–1163 is disordered; the sequence is TEDFSSESDLEESKEKLNESSSSSEGSTVDIGAPA. Residues 1200–1514 form an III repeat; that stretch reads RGKQWWNLRR…KKYYNAMKKL (315 aa). A helical membrane pass occupies residues 1219-1237; the sequence is WFETFIVFMILLSSGALAF. At 1238-1250 the chain is on the extracellular side; the sequence is EDIYIDQRKTIKT. The chain crosses the membrane as a helical span at residues 1251 to 1276; it reads MLEYADKVFTYIFILEMLLKWVAYGY. The Cytoplasmic segment spans residues 1277 to 1278; sequence QT. The chain crosses the membrane as a helical span at residues 1279–1304; sequence YFTNAWCWLDFLIVDVSLVSLTANAL. Residues 1305–1313 lie on the Extracellular side of the membrane; the sequence is GYSELGAIK. The helical transmembrane segment at 1314–1332 threads the bilayer; the sequence is SLRTLRALRPLRALSRFEG. The Cytoplasmic portion of the chain corresponds to 1333-1345; it reads MRVVVNALLGAIP. The helical transmembrane segment at 1346–1369 threads the bilayer; it reads SIMNVLLVCLIFWLIFSIMGVNLF. Residues 1370-1415 are Extracellular-facing; the sequence is AGKFYHCVNTTTGDIFEISEVNNHSDCLKLIERNETARWKNVKVNF. The cysteines at positions 1376 and 1396 are disulfide-linked. Positions 1416–1433 form an intramembrane region, pore-forming; that stretch reads DNVGFGYLSLLQVATFKG. Topologically, residues 1434–1457 are extracellular; it reads WMDIMYAAVDSRNVELQPKYEESL. Residues 1458–1483 traverse the membrane as a helical segment; it reads YMYLYFVIFIIFGSFFTLNLFIGVII. The Cytoplasmic segment spans residues 1484–1541; sequence DNFNQQKKKFGGQDIFMTEEQKKYYNAMKKLGSKKPQKPIPRPGNKFQGMVFDFVTRQ. Phosphoserine; by PKC is present on S1516. The stretch at 1523 to 1821 is one IV repeat; that stretch reads IPRPGNKFQG…WEKFDPDATQ (299 aa). A helical membrane pass occupies residues 1542–1560; that stretch reads VFDISIMILICLNMVTMMV. Residues 1561 to 1571 lie on the Extracellular side of the membrane; sequence ETDDQSDYVTS. Residues 1561–1571 are S1-S2 loop of repeat IV; sequence ETDDQSDYVTS. The chain crosses the membrane as a helical span at residues 1572-1593; sequence ILSRINLVFIVLFTGECVLKLI. The Cytoplasmic portion of the chain corresponds to 1594–1601; the sequence is SLRHYYFT. Residues 1602–1623 traverse the membrane as a helical segment; the sequence is IGWNIFDFVVVILSIVGMFLAE. Positions 1619-1636 are S3b-S4 loop of repeat IV; sequence MFLAELIEKYFVSPTLFR. Topologically, residues 1624-1636 are extracellular; sequence LIEKYFVSPTLFR. A helical membrane pass occupies residues 1637 to 1655; sequence VIRLARIGRILRLIKGAKG. The Cytoplasmic segment spans residues 1656–1665; sequence IRTLLFALMM. A helical membrane pass occupies residues 1666 to 1688; sequence SLPALFNIGLLLFLVMFIYAIFG. Topologically, residues 1689–1711 are extracellular; the sequence is MSNFAYVKREVGIDDMFNFETFG. Residues 1712–1726 constitute an intramembrane region (pore-forming); sequence NSMICLFQITTSAGW. Topologically, residues 1727 to 1759 are extracellular; that stretch reads DGLLAPILNSKPPDCDPNKVNPGSSVKGDCGNP. A disulfide bridge links C1741 with C1756. A helical membrane pass occupies residues 1760–1788; that stretch reads SVGIFFFVSYIIISFLVVVNMYIAVILEN. Residues 1789-2009 lie on the Cytoplasmic side of the membrane; sequence FSVATEESAE…EGKDEKAKGK (221 aa). An IQ domain is found at 1915-1944; the sequence is EEVSAVIIQRAYRRHLLKRTVKQASFTYNK. Residues 1984–2009 are disordered; that stretch reads PSYDRVTKPIVEKHEQEGKDEKAKGK. A compositionally biased stretch (basic and acidic residues) spans 1988-2009; that stretch reads RVTKPIVEKHEQEGKDEKAKGK.

The protein belongs to the sodium channel (TC 1.A.1.10) family. Nav1.1/SCN1A subfamily. As to quaternary structure, the Nav1.1 voltage-gated sodium channel consists of an ion-conducting alpha subunit SCN1A which is functional on its own regulated by one or more beta-1 (SCN1B), beta-2 (SCN2B), beta-3 (SCN3B) and beta-4 (SCN4B) subunits. SCN1B and SCN3B are non-covalently associated with SCN1A. SCN2B and SCN4B are disulfide-linked to SCN1A. SCN1B regulates both the expression at the plasma membrane and the voltage dependence of Nav1.1 inactivation. SCN3B and SCN4B reduce Nav1.1 conductance. Probably interacts with TMEM233; modulates the gating properties of NaV1.1. Interacts with FGF13; regulates the steady-state inactivation of Nav.1.1. In terms of processing, phosphorylation at Ser-1516 by PKC in a highly conserved cytoplasmic loop slows inactivation of the sodium channel and reduces peak sodium currents. As to expression, present in cerebellar Purkinje neurons (at protein level). Expressed by myelinated, non-C-fiber neurons in sensory ganglia.

It is found in the cell membrane. The catalysed reaction is Na(+)(in) = Na(+)(out). With respect to regulation, activated by the spider toxins Hm1a and Hm1b (H.maculata, AC P60992 and AC P0DOC5) eliciting acute pain and mechanical allodynia. Functionally, pore-forming subunit of Nav1.1, a voltage-gated sodium (Nav) channel that directly mediates the depolarizing phase of action potentials in excitable membranes. Navs, also called VGSCs (voltage-gated sodium channels) or VDSCs (voltage-dependent sodium channels), operate by switching between closed and open conformations depending on the voltage difference across the membrane. In the open conformation they allow Na(+) ions to selectively pass through the pore, along their electrochemical gradient. The influx of Na(+) ions provokes membrane depolarization, initiating the propagation of electrical signals throughout cells and tissues. By regulating the excitability of neurons, ensures that they respond appropriately to synaptic inputs, maintaining the balance between excitation and inhibition in brain neural circuits. Nav1.1 plays a role in controlling the excitability and action potential propagation from somatosensory neurons, thereby contributing to the sensory perception of mechanically-induced pain. The chain is Sodium channel protein type 1 subunit alpha from Mus musculus (Mouse).